A 344-amino-acid polypeptide reads, in one-letter code: Meiotic recombination protein DMC1 homolog A (344 aa).

Position 133–140 (133–140 (GEFRSGKT)) interacts with ATP. R235 contacts dsDNA. SsDNA is bound by residues R235, F238, R241, R247, and R315. Residues R241 and R247 each coordinate dsDNA.

It belongs to the RecA family. DMC1 subfamily. Expressed in pollen mother cells and root tips.

It localises to the nucleus. Functionally, recombinase that may participate in meiotic recombination, specifically in homologous strand assimilation, which is required for the resolution of meiotic double-strand breaks. Exhibits DNA-dependent ATPase activity when bound to single-stranded DNA (ssDNA). Mediates renaturation of homologous complementary strands as well as assimilation of single strands into homologous supercoiled duplexes leading to D-loop formation. Binds circular single-stranded DNA (ssDNA) and circular double-stranded DNA (dsDNA) in vitro. Catalyzes DNA homologous renaturation and DNA strand exchange. The rates of these activities are dependent on the state of ATP hydrolysis. Forms helical filaments along ssDNA and dsDNA, and promotes strand exchange between ssDNA and dsDNA with long DNA substrates of several thousand base pairs. The presence of the replication protein A is not required for this activity. Seems to be required for homologous pairing and subsequent chromosome segregation during male meiosis. May be not directly required for homologous pairing during male meiosis. Required for synaptonemal complex assembly and crossover formation. Functions redundantly with DMC1B. The protein is Meiotic recombination protein DMC1 homolog A of Oryza sativa subsp. indica (Rice).